The following is a 375-amino-acid chain: Alcohol dehydrogenase 1 (375 aa).

Position 2 is an N-acetylserine (serine 2). Residues cysteine 47, histidine 68, cysteine 98, cysteine 101, cysteine 104, cysteine 112, and cysteine 175 each contribute to the Zn(2+) site. NAD(+) contacts are provided by residues 200–205 (GLGGVG), aspartate 224, and lysine 229. Position 234 is an N6-succinyllysine (lysine 234). NAD(+) is bound at residue 293 to 295 (VGV). Residue lysine 340 is modified to N6-succinyllysine. Arginine 370 contributes to the NAD(+) binding site.

The protein belongs to the zinc-containing alcohol dehydrogenase family. Class-I subfamily. Dimer of identical or non-identical chains of three types (A, B, C), which are coded by 3 separate genes at different loci. The cofactor is Zn(2+). Expressed at high levels in the liver, small intestine and eye, at moderate levels in kidney, ovary and uterus, and at low levels in the spinal cord, thymus, heart, stomach mucosa, skin and testis.

It is found in the cytoplasm. The catalysed reaction is a primary alcohol + NAD(+) = an aldehyde + NADH + H(+). The enzyme catalyses a secondary alcohol + NAD(+) = a ketone + NADH + H(+). The chain is Alcohol dehydrogenase 1 (Adh1) from Mus musculus (Mouse).